The chain runs to 100 residues: Large ribosomal subunit protein bL21 (100 aa).

It belongs to the bacterial ribosomal protein bL21 family. As to quaternary structure, part of the 50S ribosomal subunit. Contacts protein L20.

Functionally, this protein binds to 23S rRNA in the presence of protein L20. The sequence is that of Large ribosomal subunit protein bL21 from Wolbachia sp. subsp. Drosophila simulans (strain wRi).